Reading from the N-terminus, the 219-residue chain is 3-demethoxyubiquinol 3-hydroxylase (219 aa).

A disordered region spans residues 21-51; it reads RTLTPGTTQAERTPAHAAPAPDAPEAGTLPS. Residues 35–46 are compositionally biased toward low complexity; sequence AHAAPAPDAPEA. Residues E68, E98, H101, E150, E182, and H185 each contribute to the Fe cation site.

The protein belongs to the COQ7 family. The cofactor is Fe cation.

The protein resides in the cell membrane. The catalysed reaction is a 5-methoxy-2-methyl-3-(all-trans-polyprenyl)benzene-1,4-diol + AH2 + O2 = a 3-demethylubiquinol + A + H2O. Its pathway is cofactor biosynthesis; ubiquinone biosynthesis. Functionally, catalyzes the hydroxylation of 2-nonaprenyl-3-methyl-6-methoxy-1,4-benzoquinol during ubiquinone biosynthesis. In Alcanivorax borkumensis (strain ATCC 700651 / DSM 11573 / NCIMB 13689 / SK2), this protein is 3-demethoxyubiquinol 3-hydroxylase.